We begin with the raw amino-acid sequence, 348 residues long: MFKMVSSPHTHSSNLTAKFMLWVMVAMLPALGMQAYFFGYGVFIQVFIALLLAVAIEIAIAKLRRKLTAFYVADLSGVLTALILAISIPPYAPYWIIVIGIIVALLLAKHSYGGLGQNLFNPAMVAYALLLVSFPVQMTGWLVPIDLLNEPPTFGDAISLVFSGVTSDGFSVHQLLGSVDGIAQATPLDSAKTSMQKLGVEGVLQSPIFSGLFANGWWQINLAFLAGGLLLIYKRIIHWQIPAAMLGMFALLSGLTDLLLPHTHLNVVSQLFSGAMMFGAFFIATDPVTASITPRGKLIFGGLIGLFVYLIRYYGNYPDAVAFSVLLANICVPLIDHYTQPRLYGTGR.

5 helical membrane-spanning segments follow: residues 15–35, 36–56, 67–87, 88–108, and 125–145; these read LTAK…GMQA, YFFG…AVAI, LTAF…LAIS, IPPY…LLLA, and VAYA…LVPI. Thr186 is subject to FMN phosphoryl threonine. The next 5 membrane-spanning stretches (helical) occupy residues 212-232, 241-261, 265-285, 298-318, and 320-340; these read LFAN…LLLI, IPAA…LLLP, LNVV…FIAT, LIFG…GNYP, and AVAF…HYTQ.

Belongs to the NqrB/RnfD family. The complex is composed of six subunits: RnfA, RnfB, RnfC, RnfD, RnfE and RnfG. Requires FMN as cofactor.

The protein resides in the cell inner membrane. Functionally, part of a membrane-bound complex that couples electron transfer with translocation of ions across the membrane. The sequence is that of Ion-translocating oxidoreductase complex subunit D from Actinobacillus pleuropneumoniae serotype 3 (strain JL03).